Here is a 160-residue protein sequence, read N- to C-terminus: Twist-related protein 2 (160 aa).

The segment at 1-63 is disordered; sequence MEEGSSSPVS…GSPSAQSFEE (63 aa). Residues 27–37 show a composition bias toward basic residues; that stretch reads KRFGRKRRYSK. The bHLH domain occupies 66–117; that stretch reads SQRILANVRERQRTQSLNEAFAALRKIIPTLPSDKLSKIQTLKLAARYIDFL.

As to quaternary structure, efficient DNA binding requires dimerization with another bHLH protein. Forms a heterodimer with TCF3/E12. Also interacts with MEF2C. In terms of tissue distribution, expressed at low levels in sclerotome and dermatome of somites, and in limb buds at 10.5 dpc. Accumulates predominantly in dermatome, prevertebrae and derivatives of branchial arches by 13 dpc. Also expressed near surface of embryo and in chondrogenic cells. In adult, expressed at low levels in skin, bladder, uterus, aorta and heart.

The protein localises to the nucleus. The protein resides in the cytoplasm. Binds to the E-box consensus sequence 5'-CANNTG-3' as a heterodimer and inhibits transcriptional activation by MYOD1, MYOG, MEF2A and MEF2C. Also represses expression of pro-inflammatory cytokines such as TNFA and IL1B. Involved in postnatal glycogen storage and energy metabolism. Inhibits the premature or ectopic differentiation of preosteoblast cells during osteogenesis, possibly by changing the internal signal transduction response of osteoblasts to external growth factors. This Mus musculus (Mouse) protein is Twist-related protein 2 (Twist2).